Reading from the N-terminus, the 490-residue chain is Glutathione reductase (490 aa).

Positions 19 and 20 each coordinate FAD. Residue Ser19 coordinates glutathione. Arg26 provides a ligand contact to glutathione. Positions 39, 48, 49, and 57 each coordinate FAD. Residues Cys49 and Cys54 are joined by a disulfide bond. Tyr110 is a glutathione binding site. Ala126 serves as a coordination point for FAD. Residues Ala208, Ile211, Glu214, Arg231, and Arg237 each contribute to the NADP(+) site. Residue Ser246 participates in glutathione binding. Gly297 lines the NADP(+) pocket. Asp337 contacts FAD. Glu343 contacts NADP(+). Residue Thr345 coordinates FAD. Glutathione is bound at residue Arg353. An NADP(+)-binding site is contributed by Val379. Residue Lys432 participates in glutathione binding. FAD is bound at residue His479. His479 serves as the catalytic Proton acceptor.

This sequence belongs to the class-I pyridine nucleotide-disulfide oxidoreductase family. In terms of assembly, homodimer. The cofactor is FAD.

Its subcellular location is the cytoplasm. The protein localises to the mitochondrion. It catalyses the reaction 2 glutathione + NADP(+) = glutathione disulfide + NADPH + H(+). Catalyzes the reduction of glutathione disulfide (GSSG) to reduced glutathione (GSH). Constitutes the major mechanism to maintain a high GSH:GSSG ratio in the cytosol. The protein is Glutathione reductase (GLR1) of Debaryomyces hansenii (strain ATCC 36239 / CBS 767 / BCRC 21394 / JCM 1990 / NBRC 0083 / IGC 2968) (Yeast).